The following is a 547-amino-acid chain: Delta-guaiene synthase 3 (547 aa).

D299, D303, and D444 together coordinate Mg(2+). Positions 299-303 match the DDXXD motif motif; that stretch reads DDTYD.

Belongs to the terpene synthase family. Mg(2+) is required as a cofactor.

The enzyme catalyses (2E,6E)-farnesyl diphosphate = delta-guaiene + diphosphate. The catalysed reaction is (2E,6E)-farnesyl diphosphate = alpha-guaiene + diphosphate. It functions in the pathway secondary metabolite biosynthesis; terpenoid biosynthesis. Sesquiterpene synthase involved in the biosynthesis of delta-guaiene (78.2%) and alpha-guaiene (20.9%), two structures composed of five- and seven-membered rings. Also produces 0.9% of alpha-humulene. The sequence is that of Delta-guaiene synthase 3 (C4) from Aquilaria crassna (Eagle wood).